We begin with the raw amino-acid sequence, 371 residues long: Chaperone protein DnaJ (371 aa).

The 65-residue stretch at 5-69 (DYYEVLGLSK…QKRAQYDQFG (65 aa)) folds into the J domain. The segment at 133-215 (GKELNVEIPV…CHGSGKVRKR (83 aa)) adopts a CR-type zinc-finger fold. Residues Cys-146, Cys-149, Cys-163, Cys-166, Cys-189, Cys-192, Cys-203, and Cys-206 each contribute to the Zn(2+) site. CXXCXGXG motif repeat units lie at residues 146–153 (CDTCKGSG), 163–170 (CKHCSGSG), 189–196 (CSHCSGTG), and 203–210 (CTTCHGSG).

This sequence belongs to the DnaJ family. As to quaternary structure, homodimer. Zn(2+) is required as a cofactor.

It is found in the cytoplasm. Functionally, participates actively in the response to hyperosmotic and heat shock by preventing the aggregation of stress-denatured proteins and by disaggregating proteins, also in an autonomous, DnaK-independent fashion. Unfolded proteins bind initially to DnaJ; upon interaction with the DnaJ-bound protein, DnaK hydrolyzes its bound ATP, resulting in the formation of a stable complex. GrpE releases ADP from DnaK; ATP binding to DnaK triggers the release of the substrate protein, thus completing the reaction cycle. Several rounds of ATP-dependent interactions between DnaJ, DnaK and GrpE are required for fully efficient folding. Also involved, together with DnaK and GrpE, in the DNA replication of plasmids through activation of initiation proteins. In Bacillus anthracis (strain A0248), this protein is Chaperone protein DnaJ.